The following is a 508-amino-acid chain: MEELQRYLKMDRSRERDFLYPLLFQEYIYALAHDFGLTKSIPYESMQILSYDNKYSSLIVKRLIIRMYQQKHLIILDNDSNQKNFLGHNKNLYSQMISEGFAVIVEIPFALRLVSSYQGKEIEKSINLRSIHSTFPFLEDKFVHLNHVLDILIPYPIHLELLVQNLRCWIQDASFLHLLRFFLYEYHNWNSLTTQKTKQNPLFFKENRRFFLFLYNFHVYESESIFLFLRKKSYHLRSTSSIAFLDRTHFYGKIEHFQVVFRNYFHTILWLFKDPFMHYFRYQGKSIMSSKGTPLLMKKWKYYLVNLWECHFYFWSQPDRIHINQLSNHFLDFLGYLSSVRPNPSVVRNQMLENAFIIDIAINKLDTIVPIIPLIGSLAKAKFCNLSGQPVSKPAWTDSPDSDIIDRFGRICRNVSHYYSGSSKKKTLYRIKYILRLSCARTLARKHKSTVRSFLKRLGSEFLEEFLIEEEQVLSFILPKISSSSQRLSKERVWYFDIIRINDLMDLS.

The protein belongs to the intron maturase 2 family. MatK subfamily.

The protein resides in the plastid. It is found in the chloroplast. In terms of biological role, usually encoded in the trnK tRNA gene intron. Probably assists in splicing its own and other chloroplast group II introns. The chain is Maturase K from Ranunculus glacialis (Glacier buttercup).